The following is a 129-amino-acid chain: Sm-like protein LSM4 (129 aa).

The region spanning 2-75 is the Sm domain; it reads LPLSLLKTAQ…IKYLRVPDEV (74 aa). The span at 79–90 shows a compositional bias: basic and acidic residues; that stretch reads VQEEKTRTDRKP. Residues 79 to 129 are disordered; the sequence is VQEEKTRTDRKPPGVGRGRGRGVDDGGARGRGRGTSMGKMGGNRGAGRGRG. Gly residues predominate over residues 111–129; sequence RGTSMGKMGGNRGAGRGRG.

This sequence belongs to the snRNP Sm proteins family. As to quaternary structure, component of the heptameric LSM1-LSM7 complex that forms a seven-membered ring structure with a donut shape. The LSM subunits are arranged in the order LSM1, LSM2, LSM3, LSM6, LSM5, LSM7 and LSM4. LSM4 subunit interacts only with its two neighboring subunits, LSM1A or LSM1B and LSM7. Component of the heptameric LSM2-LSM8 complex that forms a seven-membered ring structure with a donut shape. The LSM subunits are arranged in the order LSM8, LSM2, LSM3, LSM6, LSM5, LSM7 and LSM4. LSM4 subunit interacts only with its two neighboring subunits, LSM8 and LSM7. Post-translationally, methylated by PMRT15/SKB1 in response to salt stress or abscisic acid (ABA) treatment. As to expression, expressed in roots, leaves, stems, flowers and siliques.

The protein resides in the cytoplasm. Its subcellular location is the nucleus. Functionally, component of LSM protein complexes, which are involved in RNA processing. Component of the cytoplasmic LSM1-LSM7 complex which is involved in mRNA degradation by promoting decapping and leading to accurate 5'-3' mRNA decay. The cytoplasmic LSM1-LSM7 complex regulates developmental gene expression by the decapping of specific development-related transcripts. Component of the nuclear LSM2-LSM8 complex which is involved splicing nuclear mRNAs. LSM2-LSM8 binds directly to the U6 small nuclear RNAs (snRNAs) and is essential for accurate splicing of selected development-related mRNAs through the stabilization of the spliceosomal U6 snRNA. Plays a critical role in the regulation of development-related gene expression. In Arabidopsis thaliana (Mouse-ear cress), this protein is Sm-like protein LSM4.